Here is a 164-residue protein sequence, read N- to C-terminus: Endoribonuclease YbeY (164 aa).

Residues His117, His121, and His127 each coordinate Zn(2+).

It belongs to the endoribonuclease YbeY family. The cofactor is Zn(2+).

It is found in the cytoplasm. Functionally, single strand-specific metallo-endoribonuclease involved in late-stage 70S ribosome quality control and in maturation of the 3' terminus of the 16S rRNA. The chain is Endoribonuclease YbeY from Mycoplasma mycoides subsp. mycoides SC (strain CCUG 32753 / NCTC 10114 / PG1).